Here is a 666-residue protein sequence, read N- to C-terminus: ATP synthase subunit alpha 2 (666 aa).

182-189 (GDRATGKT) contributes to the ATP binding site. The disordered stretch occupies residues 527-666 (MPAEDAAGDI…DAEAEARHKR (140 aa)). Over residues 545-590 (ARGDADRDADHGANREVSREVSPEASREVSREVSCEVSHEADRDAA) the composition is skewed to basic and acidic residues. The span at 591 to 601 (ADAARVAGRAP) shows a compositional bias: low complexity. A compositionally biased stretch (basic and acidic residues) spans 623–641 (ADGDRASASRPRPDARGDA).

This sequence belongs to the ATPase alpha/beta chains family. F-type ATPases have 2 components, CF(1) - the catalytic core - and CF(0) - the membrane proton channel. CF(1) has five subunits: alpha(3), beta(3), gamma(1), delta(1), epsilon(1). CF(0) has three main subunits: a(1), b(2) and c(9-12). The alpha and beta chains form an alternating ring which encloses part of the gamma chain. CF(1) is attached to CF(0) by a central stalk formed by the gamma and epsilon chains, while a peripheral stalk is formed by the delta and b chains.

It localises to the cell inner membrane. It catalyses the reaction ATP + H2O + 4 H(+)(in) = ADP + phosphate + 5 H(+)(out). Its function is as follows. Produces ATP from ADP in the presence of a proton gradient across the membrane. The alpha chain is a regulatory subunit. This is ATP synthase subunit alpha 2 from Burkholderia pseudomallei (strain 1106a).